We begin with the raw amino-acid sequence, 62 residues long: GKIAVSIVKALEHLHSKLSVIHRDVKPSNVLINKEGQVNMCDFGISGYLVDSVAKTMDAGCK.

One can recognise a Protein kinase domain in the interval 1 to 62 (GKIAVSIVKA…VAKTMDAGCK (62 aa)).

This sequence belongs to the protein kinase superfamily. STE Ser/Thr protein kinase family. MAP kinase kinase subfamily. Post-translationally, activated by phosphorylation on Ser/Thr catalyzed by MAP kinase kinase kinases.

It catalyses the reaction L-seryl-[protein] + ATP = O-phospho-L-seryl-[protein] + ADP + H(+). It carries out the reaction L-threonyl-[protein] + ATP = O-phospho-L-threonyl-[protein] + ADP + H(+). The catalysed reaction is L-tyrosyl-[protein] + ATP = O-phospho-L-tyrosyl-[protein] + ADP + H(+). Functionally, catalyzes the concomitant phosphorylation of a threonine and a tyrosine residue in a Thr-Glu-Tyr sequence located in MAP kinases. The protein is Dual specificity mitogen-activated protein kinase kinase 3 (map2k3) of Xenopus laevis (African clawed frog).